The following is a 417-amino-acid chain: Gamma-glutamyl phosphate reductase (417 aa).

This sequence belongs to the gamma-glutamyl phosphate reductase family.

It localises to the cytoplasm. The enzyme catalyses L-glutamate 5-semialdehyde + phosphate + NADP(+) = L-glutamyl 5-phosphate + NADPH + H(+). It functions in the pathway amino-acid biosynthesis; L-proline biosynthesis; L-glutamate 5-semialdehyde from L-glutamate: step 2/2. Its function is as follows. Catalyzes the NADPH-dependent reduction of L-glutamate 5-phosphate into L-glutamate 5-semialdehyde and phosphate. The product spontaneously undergoes cyclization to form 1-pyrroline-5-carboxylate. The chain is Gamma-glutamyl phosphate reductase from Erwinia tasmaniensis (strain DSM 17950 / CFBP 7177 / CIP 109463 / NCPPB 4357 / Et1/99).